The following is a 197-amino-acid chain: Holliday junction branch migration complex subunit RuvA (197 aa).

The tract at residues 1–64 (MIGRLSGKLI…EDAHLLYGFA (64 aa)) is domain I. The interval 65–143 (SKEERQTFRQ…TGGNLTVPGG (79 aa)) is domain II. Residues 143–147 (GLPFA) form a flexible linker region. Residues 148–197 (ATPDEKSDIVNALLALGYNEKEAAAATKSLPADVTVSEGVRLALKSLMKV) are domain III.

It belongs to the RuvA family. Homotetramer. Forms an RuvA(8)-RuvB(12)-Holliday junction (HJ) complex. HJ DNA is sandwiched between 2 RuvA tetramers; dsDNA enters through RuvA and exits via RuvB. An RuvB hexamer assembles on each DNA strand where it exits the tetramer. Each RuvB hexamer is contacted by two RuvA subunits (via domain III) on 2 adjacent RuvB subunits; this complex drives branch migration. In the full resolvosome a probable DNA-RuvA(4)-RuvB(12)-RuvC(2) complex forms which resolves the HJ.

The protein resides in the cytoplasm. In terms of biological role, the RuvA-RuvB-RuvC complex processes Holliday junction (HJ) DNA during genetic recombination and DNA repair, while the RuvA-RuvB complex plays an important role in the rescue of blocked DNA replication forks via replication fork reversal (RFR). RuvA specifically binds to HJ cruciform DNA, conferring on it an open structure. The RuvB hexamer acts as an ATP-dependent pump, pulling dsDNA into and through the RuvAB complex. HJ branch migration allows RuvC to scan DNA until it finds its consensus sequence, where it cleaves and resolves the cruciform DNA. This is Holliday junction branch migration complex subunit RuvA from Chromobacterium violaceum (strain ATCC 12472 / DSM 30191 / JCM 1249 / CCUG 213 / NBRC 12614 / NCIMB 9131 / NCTC 9757 / MK).